Here is a 308-residue protein sequence, read N- to C-terminus: Dipeptide transport system permease protein DppB (308 aa).

A run of 7 helical transmembrane segments spans residues 10–30, 59–79, 100–120, 131–151, 168–188, 228–248, and 278–298; these read WAMA…MKVI, LIFQ…GPSI, LGMT…VIAA, AMSL…TLLI, SPIH…AIIA, MPVI…SFVI, and VFYS…YGLL. One can recognise an ABC transmembrane type-1 domain in the interval 94-295; it reads FPVSFELGMT…IMLFLVDLAY (202 aa).

This sequence belongs to the binding-protein-dependent transport system permease family. OppBC subfamily.

It localises to the cell membrane. Probably part of the ABC transporter DppBCDE involved in dipeptide transport. Responsible for the translocation of the substrate across the membrane. The protein is Dipeptide transport system permease protein DppB (dppB) of Bacillus subtilis (strain 168).